The sequence spans 534 residues: Probable alpha-galactosidase A (534 aa).

An N-terminal signal peptide occupies residues 1-25 (MRLITRWIPLANALASTMPVQVVAS). The cysteines at positions 47 and 79 are disulfide-linked. 4 N-linked (GlcNAc...) asparagine glycosylation sites follow: Asn50, Asn88, Asn94, and Asn124. The cysteines at positions 127 and 157 are disulfide-linked. The active-site Nucleophile is Asp155. Asn204 carries an N-linked (GlcNAc...) asparagine glycan. Asp213 serves as the catalytic Proton donor. Residues 413-534 (CSQVIPTGLI…GLPAGVHVAL (122 aa)) enclose the Ricin B-type lectin domain. A disulfide bridge connects residues Cys430 and Cys443. Asn444 carries N-linked (GlcNAc...) asparagine glycosylation. An intrachain disulfide couples Cys468 to Cys481.

Belongs to the glycosyl hydrolase 27 family.

The protein resides in the secreted. It catalyses the reaction Hydrolysis of terminal, non-reducing alpha-D-galactose residues in alpha-D-galactosides, including galactose oligosaccharides, galactomannans and galactolipids.. In terms of biological role, hydrolyzes a variety of simple alpha-D-galactoside as well as more complex molecules such as oligosaccharides and polysaccharides. In Aspergillus oryzae (strain ATCC 42149 / RIB 40) (Yellow koji mold), this protein is Probable alpha-galactosidase A (aglA).